Reading from the N-terminus, the 534-residue chain is CTP synthase (534 aa).

The interval M1 to L267 is amidoligase domain. S13 serves as a coordination point for CTP. S13 contributes to the UTP binding site. ATP is bound at residue S14 to I19. Y54 is an L-glutamine binding site. D71 provides a ligand contact to ATP. 2 residues coordinate Mg(2+): D71 and E141. Residues D148–E150, K188–Q193, and K224 contribute to the CTP site. UTP is bound by residues K188–Q193 and K224. R240–V242 contributes to the ATP binding site. The Glutamine amidotransferase type-1 domain occupies K292 to N534. G354 is an L-glutamine binding site. C381 (nucleophile; for glutamine hydrolysis) is an active-site residue. L-glutamine is bound by residues L382–Q385, E405, and R463. Active-site residues include H508 and E510.

This sequence belongs to the CTP synthase family. In terms of assembly, homotetramer.

The enzyme catalyses UTP + L-glutamine + ATP + H2O = CTP + L-glutamate + ADP + phosphate + 2 H(+). It catalyses the reaction L-glutamine + H2O = L-glutamate + NH4(+). It carries out the reaction UTP + NH4(+) + ATP = CTP + ADP + phosphate + 2 H(+). It participates in pyrimidine metabolism; CTP biosynthesis via de novo pathway; CTP from UDP: step 2/2. With respect to regulation, allosterically activated by GTP, when glutamine is the substrate; GTP has no effect on the reaction when ammonia is the substrate. The allosteric effector GTP functions by stabilizing the protein conformation that binds the tetrahedral intermediate(s) formed during glutamine hydrolysis. Inhibited by the product CTP, via allosteric rather than competitive inhibition. Its function is as follows. Catalyzes the ATP-dependent amination of UTP to CTP with either L-glutamine or ammonia as the source of nitrogen. Regulates intracellular CTP levels through interactions with the four ribonucleotide triphosphates. The protein is CTP synthase of Streptococcus pyogenes serotype M4 (strain MGAS10750).